We begin with the raw amino-acid sequence, 426 residues long: Serine--tRNA ligase (426 aa).

233–235 (TAE) contacts L-serine. 264–266 (RSE) contacts ATP. Glu287 provides a ligand contact to L-serine. 351-354 (EISS) contacts ATP. Residue Ser387 participates in L-serine binding.

Belongs to the class-II aminoacyl-tRNA synthetase family. Type-1 seryl-tRNA synthetase subfamily. As to quaternary structure, homodimer. The tRNA molecule binds across the dimer.

The protein resides in the cytoplasm. The catalysed reaction is tRNA(Ser) + L-serine + ATP = L-seryl-tRNA(Ser) + AMP + diphosphate + H(+). The enzyme catalyses tRNA(Sec) + L-serine + ATP = L-seryl-tRNA(Sec) + AMP + diphosphate + H(+). Its pathway is aminoacyl-tRNA biosynthesis; selenocysteinyl-tRNA(Sec) biosynthesis; L-seryl-tRNA(Sec) from L-serine and tRNA(Sec): step 1/1. Catalyzes the attachment of serine to tRNA(Ser). Is also able to aminoacylate tRNA(Sec) with serine, to form the misacylated tRNA L-seryl-tRNA(Sec), which will be further converted into selenocysteinyl-tRNA(Sec). This is Serine--tRNA ligase from Clostridium tetani (strain Massachusetts / E88).